Here is a 197-residue protein sequence, read N- to C-terminus: Ras-related protein Rab-7B (197 aa).

GTP is bound by residues 14-21 (GEKSVGKT), 33-38 (VTLKPT), 57-61 (DTSGQ), 119-122 (NKID), and 152-153 (AK). An Effector region motif is present at residues 31–39 (RFVTLKPTI). S-geranylgeranyl cysteine attachment occurs at residues C196 and C197.

The protein belongs to the small GTPase superfamily. Rab family.

Functionally, protein transport. Probably involved in vesicular traffic. The sequence is that of Ras-related protein Rab-7B (rab7B) from Dictyostelium discoideum (Social amoeba).